Consider the following 69-residue polypeptide: Cytochrome c oxidase subunit 8A, mitochondrial (69 aa).

Residues 1 to 25 (MSVLTPLLLRGLTGSARRLPVPRAK) constitute a mitochondrion transit peptide. The short motif at 2–19 (SVLTPLLLRGLTGSARRL) is the SIFI-degron element. Topologically, residues 26–36 (IHSLPPEGKLG) are mitochondrial matrix. A helical transmembrane segment spans residues 37-60 (IMELAVGLTSCFVTFLLPAGWILS). At 61-69 (HLETYRRPE) the chain is on the mitochondrial intermembrane side.

The protein belongs to the cytochrome c oxidase VIII family. Component of the cytochrome c oxidase (complex IV, CIV), a multisubunit enzyme composed of 14 subunits. The complex is composed of a catalytic core of 3 subunits MT-CO1, MT-CO2 and MT-CO3, encoded in the mitochondrial DNA, and 11 supernumerary subunits COX4I1 (or COX4I2), COX5A, COX5B, COX6A1 (or COX6A2), COX6B1 (or COX6B2), COX6C, COX7A2 (or COX7A1), COX7B, COX7C, COX8A and NDUFA4, which are encoded in the nuclear genome. The complex exists as a monomer or a dimer and forms supercomplexes (SCs) in the inner mitochondrial membrane with NADH-ubiquinone oxidoreductase (complex I, CI) and ubiquinol-cytochrome c oxidoreductase (cytochrome b-c1 complex, complex III, CIII), resulting in different assemblies (supercomplex SCI(1)III(2)IV(1) and megacomplex MCI(2)III(2)IV(2)). In terms of processing, in response to mitochondrial stress, the precursor protein is ubiquitinated by the SIFI complex in the cytoplasm before mitochondrial import, leading to its degradation. Within the SIFI complex, UBR4 initiates ubiquitin chain that are further elongated or branched by KCMF1. Widely expressed.

It localises to the mitochondrion inner membrane. Its pathway is energy metabolism; oxidative phosphorylation. Its function is as follows. Component of the cytochrome c oxidase, the last enzyme in the mitochondrial electron transport chain which drives oxidative phosphorylation. The respiratory chain contains 3 multisubunit complexes succinate dehydrogenase (complex II, CII), ubiquinol-cytochrome c oxidoreductase (cytochrome b-c1 complex, complex III, CIII) and cytochrome c oxidase (complex IV, CIV), that cooperate to transfer electrons derived from NADH and succinate to molecular oxygen, creating an electrochemical gradient over the inner membrane that drives transmembrane transport and the ATP synthase. Cytochrome c oxidase is the component of the respiratory chain that catalyzes the reduction of oxygen to water. Electrons originating from reduced cytochrome c in the intermembrane space (IMS) are transferred via the dinuclear copper A center (CU(A)) of subunit 2 and heme A of subunit 1 to the active site in subunit 1, a binuclear center (BNC) formed by heme A3 and copper B (CU(B)). The BNC reduces molecular oxygen to 2 water molecules using 4 electrons from cytochrome c in the IMS and 4 protons from the mitochondrial matrix. The chain is Cytochrome c oxidase subunit 8A, mitochondrial (COX8A) from Homo sapiens (Human).